The primary structure comprises 1554 residues: Lysine-specific demethylase 5C (1554 aa).

Positions 14-55 constitute a JmjN domain; it reads CPVFEPSWAEFRDPLGYIAKIRPIAEKSGICKIRPPADWQPP. Residues 79 to 169 enclose the ARID domain; it reads TRVKLNYLDQ…IVYPYEMYQS (91 aa). The segment covering 197-207 has biased composition (polar residues); that stretch reads LRQSVQPSKFN. The interval 197–227 is disordered; the sequence is LRQSVQPSKFNSYGRRAKRLQPDPEPTEEDI. Residues lysine 205, lysine 229, lysine 244, and lysine 274 each participate in a glycyl lysine isopeptide (Lys-Gly) (interchain with G-Cter in SUMO2) cross-link. The interval 284–303 is disordered; that stretch reads ESTSPKTFLEGKEELSHSPE. Phosphoserine is present on serine 287. Lysine 295 is covalently cross-linked (Glycyl lysine isopeptide (Lys-Gly) (interchain with G-Cter in SUMO2)). 2 positions are modified to phosphoserine: serine 301 and serine 317. A PHD-type 1 zinc finger spans residues 326–372; it reads VCRMCSRGDEDDKLLLCDGCDDNYHIFCLLPPLPEIPKGVWRCPKCV. A JmjC domain is found at 468-634; it reads EYATSGWNLN…AGRQCIEHYR (167 aa). Histidine 514, aspartate 517, and histidine 602 together coordinate Fe cation. Serine 893 and serine 897 each carry phosphoserine. Residue lysine 1127 forms a Glycyl lysine isopeptide (Lys-Gly) (interchain with G-Cter in SUMO2) linkage. The PHD-type 2 zinc finger occupies 1187-1248; the sequence is ICVCGQVPAG…DTKFLCPLCM (62 aa). 2 disordered regions span residues 1319-1364 and 1437-1535; these read SKPE…EGSG and AERH…APFS. A Phosphoserine modification is found at serine 1353. A compositionally biased stretch (basic residues) spans 1442-1457; the sequence is SRTRGRALERRRRRKV. Over residues 1458-1475 the composition is skewed to basic and acidic residues; sequence DRGGEPDDPAREELEPKR. The span at 1482–1497 shows a compositional bias: acidic residues; it reads EAEEVQEEEELEEETG.

Belongs to the JARID1 histone demethylase family. In terms of assembly, part of two distinct complexes, one containing E2F6, and the other containing REST. Interacts with ZMYND8. Requires Fe(2+) as cofactor.

It localises to the nucleus. The enzyme catalyses N(6),N(6),N(6)-trimethyl-L-lysyl(4)-[histone H3] + 3 2-oxoglutarate + 3 O2 = L-lysyl(4)-[histone H3] + 3 formaldehyde + 3 succinate + 3 CO2. In terms of biological role, histone demethylase that specifically demethylates 'Lys-4' of histone H3, thereby playing a central role in histone code. Does not demethylate histone H3 'Lys-9', H3 'Lys-27', H3 'Lys-36', H3 'Lys-79' or H4 'Lys-20'. Demethylates trimethylated and dimethylated but not monomethylated H3 'Lys-4'. Participates in transcriptional repression of neuronal genes by recruiting histone deacetylases and REST at neuron-restrictive silencer elements. Represses the CLOCK-BMAL1 heterodimer-mediated transcriptional activation of the core clock component PER2. The polypeptide is Lysine-specific demethylase 5C (Kdm5c) (Mus musculus (Mouse)).